The sequence spans 103 residues: Putative protein YmfH (103 aa).

A disordered region spans residues 1–34 (MVNAAQRTRVKVEADNRPSVDTHPPGVQPSPGTG). Residues 10–20 (VKVEADNRPSV) show a composition bias toward basic and acidic residues. The next 2 membrane-spanning stretches (helical) occupy residues 42-62 (MLCV…TALF) and 73-93 (GLIT…CFVE).

It localises to the cell inner membrane. This chain is Putative protein YmfH (ymfH), found in Escherichia coli (strain K12).